The sequence spans 236 residues: Small ribosomal subunit protein uS2c (236 aa).

The protein belongs to the universal ribosomal protein uS2 family.

The protein localises to the plastid. It localises to the chloroplast. This Buxus microphylla (Littleleaf boxwood) protein is Small ribosomal subunit protein uS2c (rps2).